The primary structure comprises 483 residues: Probable 4-aminobutyrate aminotransferase, mitochondrial (483 aa).

Position 148–149 (148–149 (GT)) interacts with pyridoxal 5'-phosphate. Arginine 204 is a binding site for substrate. Lysine 341 bears the N6-(pyridoxal phosphate)lysine mark. Threonine 365 contacts pyridoxal 5'-phosphate.

Belongs to the class-III pyridoxal-phosphate-dependent aminotransferase family. As to quaternary structure, homodimer. Pyridoxal 5'-phosphate serves as cofactor.

The protein localises to the mitochondrion matrix. The enzyme catalyses 4-aminobutanoate + 2-oxoglutarate = succinate semialdehyde + L-glutamate. It carries out the reaction (S)-3-amino-2-methylpropanoate + 2-oxoglutarate = 2-methyl-3-oxopropanoate + L-glutamate. The protein is Probable 4-aminobutyrate aminotransferase, mitochondrial (gta-1) of Caenorhabditis elegans.